The following is a 220-amino-acid chain: Protein GrpE (220 aa).

The protein belongs to the GrpE family. Homodimer.

It localises to the cytoplasm. In terms of biological role, participates actively in the response to hyperosmotic and heat shock by preventing the aggregation of stress-denatured proteins, in association with DnaK and GrpE. It is the nucleotide exchange factor for DnaK and may function as a thermosensor. Unfolded proteins bind initially to DnaJ; upon interaction with the DnaJ-bound protein, DnaK hydrolyzes its bound ATP, resulting in the formation of a stable complex. GrpE releases ADP from DnaK; ATP binding to DnaK triggers the release of the substrate protein, thus completing the reaction cycle. Several rounds of ATP-dependent interactions between DnaJ, DnaK and GrpE are required for fully efficient folding. This Bartonella quintana (strain Toulouse) (Rochalimaea quintana) protein is Protein GrpE.